The primary structure comprises 95 residues: Large ribosomal subunit protein uL23 (95 aa).

Belongs to the universal ribosomal protein uL23 family. Part of the 50S ribosomal subunit. Contacts protein L29, and trigger factor when it is bound to the ribosome.

Its function is as follows. One of the early assembly proteins it binds 23S rRNA. One of the proteins that surrounds the polypeptide exit tunnel on the outside of the ribosome. Forms the main docking site for trigger factor binding to the ribosome. The protein is Large ribosomal subunit protein uL23 of Geobacillus kaustophilus (strain HTA426).